Consider the following 89-residue polypeptide: Small ribosomal subunit protein uS14A (89 aa).

This sequence belongs to the universal ribosomal protein uS14 family. Part of the 30S ribosomal subunit. Contacts proteins S3 and S10.

Its function is as follows. Binds 16S rRNA, required for the assembly of 30S particles and may also be responsible for determining the conformation of the 16S rRNA at the A site. The chain is Small ribosomal subunit protein uS14A from Pediococcus pentosaceus (strain ATCC 25745 / CCUG 21536 / LMG 10740 / 183-1w).